The sequence spans 495 residues: Aspartyl/glutamyl-tRNA(Asn/Gln) amidotransferase subunit B (495 aa).

This sequence belongs to the GatB/GatE family. GatB subfamily. In terms of assembly, heterotrimer of A, B and C subunits.

It carries out the reaction L-glutamyl-tRNA(Gln) + L-glutamine + ATP + H2O = L-glutaminyl-tRNA(Gln) + L-glutamate + ADP + phosphate + H(+). The enzyme catalyses L-aspartyl-tRNA(Asn) + L-glutamine + ATP + H2O = L-asparaginyl-tRNA(Asn) + L-glutamate + ADP + phosphate + 2 H(+). In terms of biological role, allows the formation of correctly charged Asn-tRNA(Asn) or Gln-tRNA(Gln) through the transamidation of misacylated Asp-tRNA(Asn) or Glu-tRNA(Gln) in organisms which lack either or both of asparaginyl-tRNA or glutaminyl-tRNA synthetases. The reaction takes place in the presence of glutamine and ATP through an activated phospho-Asp-tRNA(Asn) or phospho-Glu-tRNA(Gln). The protein is Aspartyl/glutamyl-tRNA(Asn/Gln) amidotransferase subunit B of Methylocella silvestris (strain DSM 15510 / CIP 108128 / LMG 27833 / NCIMB 13906 / BL2).